The primary structure comprises 90 residues: MSSMDNTMQFNFNDDSFDADVQEVLLSVYDALEEKGYNPINQIVGYLLSGDPAYIPRHKDARTLIRKLERDELIETLVKSYLRSHGKENK.

It belongs to the UPF0297 family.

In Shouchella clausii (strain KSM-K16) (Alkalihalobacillus clausii), this protein is UPF0297 protein ABC1593.